The chain runs to 146 residues: Holo-[acyl-carrier-protein] synthase (146 aa).

Mg(2+)-binding residues include D9 and E63.

Belongs to the P-Pant transferase superfamily. AcpS family. Mg(2+) is required as a cofactor.

It is found in the cytoplasm. It carries out the reaction apo-[ACP] + CoA = holo-[ACP] + adenosine 3',5'-bisphosphate + H(+). Functionally, transfers the 4'-phosphopantetheine moiety from coenzyme A to a Ser of acyl-carrier-protein. This is Holo-[acyl-carrier-protein] synthase from Burkholderia multivorans (strain ATCC 17616 / 249).